The chain runs to 267 residues: Aspartate/glutamate leucyltransferase (267 aa).

Residues 246 to 267 (EQEEQTRPLFRPSATGFSTGQE) form a disordered region.

Belongs to the R-transferase family. Bpt subfamily.

It localises to the cytoplasm. It catalyses the reaction N-terminal L-glutamyl-[protein] + L-leucyl-tRNA(Leu) = N-terminal L-leucyl-L-glutamyl-[protein] + tRNA(Leu) + H(+). The enzyme catalyses N-terminal L-aspartyl-[protein] + L-leucyl-tRNA(Leu) = N-terminal L-leucyl-L-aspartyl-[protein] + tRNA(Leu) + H(+). Its function is as follows. Functions in the N-end rule pathway of protein degradation where it conjugates Leu from its aminoacyl-tRNA to the N-termini of proteins containing an N-terminal aspartate or glutamate. The chain is Aspartate/glutamate leucyltransferase from Granulibacter bethesdensis (strain ATCC BAA-1260 / CGDNIH1).